A 312-amino-acid polypeptide reads, in one-letter code: Glyoxylate/hydroxypyruvate reductase A (312 aa).

The active site involves Arg-227. The Proton donor role is filled by His-275.

The protein belongs to the D-isomer specific 2-hydroxyacid dehydrogenase family. GhrA subfamily.

It is found in the cytoplasm. The catalysed reaction is glycolate + NADP(+) = glyoxylate + NADPH + H(+). It catalyses the reaction (R)-glycerate + NAD(+) = 3-hydroxypyruvate + NADH + H(+). It carries out the reaction (R)-glycerate + NADP(+) = 3-hydroxypyruvate + NADPH + H(+). Catalyzes the NADPH-dependent reduction of glyoxylate and hydroxypyruvate into glycolate and glycerate, respectively. The protein is Glyoxylate/hydroxypyruvate reductase A of Escherichia coli (strain SMS-3-5 / SECEC).